Consider the following 580-residue polypeptide: Thymidine kinase (580 aa).

Disordered regions lie at residues 1 to 60 (MAEG…KSVK) and 133 to 157 (VCGR…ASMG). The span at 137-149 (PPLPPPNHPPPAT) shows a compositional bias: pro residues. Position 260–267 (260–267 (GVMGVGKS)) interacts with ATP. The active-site Proton acceptor is the Glu-287. Residue Gln-325 coordinates substrate. Residue Arg-415 coordinates ATP. Arg-421 provides a ligand contact to substrate.

It belongs to the herpesviridae thymidine kinase family. As to quaternary structure, homodimer.

The enzyme catalyses thymidine + ATP = dTMP + ADP + H(+). In terms of biological role, catalyzes the transfer of the gamma-phospho group of ATP to thymidine to generate dTMP in the salvage pathway of pyrimidine synthesis. The dTMP serves as a substrate for DNA polymerase during viral DNA replication. Allows the virus to be reactivated and to grow in non-proliferative cells lacking a high concentration of phosphorylated nucleic acid precursors. In Human herpesvirus 8 type P (isolate GK18) (HHV-8), this protein is Thymidine kinase.